Consider the following 128-residue polypeptide: Small ribosomal subunit protein uS11 (128 aa).

The protein belongs to the universal ribosomal protein uS11 family. Part of the 30S ribosomal subunit. Interacts with proteins S7 and S18. Binds to IF-3.

Functionally, located on the platform of the 30S subunit, it bridges several disparate RNA helices of the 16S rRNA. Forms part of the Shine-Dalgarno cleft in the 70S ribosome. The sequence is that of Small ribosomal subunit protein uS11 from Desulforudis audaxviator (strain MP104C).